A 1938-amino-acid chain; its full sequence is Myosin-4 (1938 aa).

The Myosin N-terminal SH3-like domain maps to 33-82 (DAKSSVFVADPKESFVKATVQSREGGKVTAKTEAGATVTVKEDQVFPMNP). Phosphoserine is present on Ser36. Thr64 and Thr69 each carry phosphothreonine. The Myosin motor domain maps to 86–781 (DKIEDMAMMT…LLGLLEEMRD (696 aa)). ATP is bound at residue 179 to 186 (GESGAGKT). Tyr389 is modified (phosphotyrosine). Ser392 bears the Phosphoserine mark. Thr419 carries the post-translational modification Phosphothreonine. Tyr424 carries the phosphotyrosine modification. The interval 658-680 (LNKLMTNLRSTHPHFVRCIIPNE) is actin-binding. His756 bears the Pros-methylhistidine mark. The actin-binding stretch occupies residues 760–774 (KFGHTKVFFKAGLLG). One can recognise an IQ domain in the interval 784 to 813 (LAQLITRTQAMCRGFLARVEYKKMVERRES). A coiled-coil region spans residues 845–1926 (SAETEKEMAN…ESQVNKLRVK (1082 aa)). Phosphoserine occurs at positions 1091, 1095, 1161, and 1236. Phosphothreonine is present on Thr1240. A Phosphoserine modification is found at Ser1242. Position 1254 is a phosphothreonine (Thr1254). Ser1260 carries the post-translational modification Phosphoserine. Phosphothreonine is present on Thr1264. A Phosphoserine modification is found at Ser1277. Residue Thr1285 is modified to Phosphothreonine. Phosphoserine is present on residues Ser1287, Ser1291, Ser1302, and Ser1305. A Phosphotyrosine modification is found at Tyr1463. The residue at position 1466 (Thr1466) is a Phosphothreonine. A Phosphoserine modification is found at Ser1473. At Tyr1491 the chain carries Phosphotyrosine. The residue at position 1494 (Ser1494) is a Phosphoserine. The residue at position 1500 (Thr1500) is a Phosphothreonine. Ser1513 carries the phosphoserine modification. The residue at position 1516 (Thr1516) is a Phosphothreonine. A phosphoserine mark is found at Ser1541, Ser1553, Ser1573, Ser1599, Ser1602, Ser1713, and Ser1725. 2 positions are modified to phosphothreonine: Thr1729 and Thr1735. Residue Ser1738 is modified to Phosphoserine.

The protein belongs to the TRAFAC class myosin-kinesin ATPase superfamily. Myosin family. In terms of assembly, muscle myosin is a hexameric protein that consists of 2 heavy chain subunits (MHC), 2 alkali light chain subunits (MLC) and 2 regulatory light chain subunits (MLC-2).

It is found in the cytoplasm. The protein localises to the myofibril. Its function is as follows. Muscle contraction. The chain is Myosin-4 (MYH4) from Oryctolagus cuniculus (Rabbit).